A 1408-amino-acid chain; its full sequence is MSASPSPIGAAAGLDHLQARRDEEVVDSEKDALAHDSHAVNSGIPHPTATAPTIGIPIVPISAGRESSAPEEKISRSSIAASSDILHNPPSEKSISSAVPKSHRYKKSKFNFLKSRKKKEEEEKKNKEKEKEASVLPPVSFFALFKFAAPLEIVAMVFGLLLAIAAGSCQPLMTLIFGRLTTSFTNYAVIVNQISQGGLTPETAAALQAAKDDLKTQSGHNALYLMAIGIGMFLATWLYMFIWNVTGELNSKRIRERYLAAVLRQEIAYFDDLGAGEVATRIQTDCHLVQEGTSEKVALVFQYAGTFVCGFVLAFVRSPRLAGALISILPVIMICGGIMMTAMAKFGTAALDHIAKAGSLAEEVIGSIRTVQAFGKEKILGNKFADHIEKSKVIGRKGSIFEGFGLSIMFFAIYAAYALAFYYGGILVSHGDANSGIVINVFMSILIGSFSMAMLAPELAAVTKARGAAAKLFATIDRVPAIDSANKEGLKPDSLHGEISFENVRFHYPSRPSVPILKGFTTTFEAGKTFALVGASGSGKSTVVSLIERFYDPVSGVVKLDGRDIRSLNLNWLRQQIGLVSQEPTLFGTTVRGNVEHGLIGSIYENASPEEKFELVKKACIDANAHGFIMKLPQGYDTMVGERGMLLSGGQKQRVAIARAIVSDPRILLLDEATSALDTQSEGIVQDALDKASRGRTTITIAHRLSTIRDADRIYVMGAGEVIEQGSHNELLNNENGPYAQLVNNQKLAQEAAAEALQEDDDIDDLDDTVLGGASSPMQEKNGQLYRAVTGRSLASIAMDDIQAKRAEDLAAEDKIPSSFALYARLLRMNSADKLIYIFAFIAAICAGMVYPSLAILFGKALSDFEIQDPNELRQALSRKALWYFITALAAAIVIFFQSAGFSRAGWDLNGVLRKKLFTATLRHDIEWFDEDRNSTGAVTSNLADQPQKVQGLFGPTLGTVVQSCATLIGGCIIGLCYGPLLSLIGIACIPILVSGGYIRLKVVVLKDQRMKKLHAASAHLASEAAGAVRTVASLTREEDVRRIYSEALKGPMKLNFRTSIKSQCLFAASQGLTFCIIALVFYIGALWIIDGKYSTASFYTVLNSIVFASIQAGNVFTFVPDASKANSSAASIFRTIDNEPAINAESTEGKMLDHEHVVGHVRIEGVHFRYPTRPGVRVLRNLTIDVPAGTYVALVGPSGCGKSTTIQMLERFYDPLAGRVTLDGIDIKELNLANYRSQISLVSQEPTLYAGTIRFNILLGANKPMEEVTQDEIDAACKDANIYDFIISLPDGFDTEVGGKGSQLSGGQKQRIAIARALIRNPKVLLLDEATSALDSQSEKVVQEALDKAAKGRTTIAIAHRLSSIQHSDQIYYFSEGKVAEHGTHQELLAKKGGYYDLVQMQNLSRQ.

Low complexity predominate over residues 1–13 (MSASPSPIGAAAG). The tract at residues 1-103 (MSASPSPIGA…SISSAVPKSH (103 aa)) is disordered. A compositionally biased stretch (basic and acidic residues) spans 17-38 (LQARRDEEVVDSEKDALAHDSH). 2 helical membrane-spanning segments follow: residues 147 to 167 (FAAP…IAAG) and 223 to 243 (LYLM…MFIW). One can recognise an ABC transmembrane type-1 1 domain in the interval 157–464 (VFGLLLAIAA…LAPELAAVTK (308 aa)). The N-linked (GlcNAc...) asparagine glycan is linked to Asn244. 4 helical membrane-spanning segments follow: residues 296–316 (KVAL…LAFV), 321–341 (LAGA…IMMT), 408–428 (IMFF…GILV), and 436–456 (GIVI…AMLA). The 246-residue stretch at 499-744 (ISFENVRFHY…ENGPYAQLVN (246 aa)) folds into the ABC transporter 1 domain. Residue 534–541 (GASGSGKS) coordinates ATP. Transmembrane regions (helical) follow at residues 838 to 858 (IFAF…AILF) and 882 to 902 (LWYF…SAGF). An ABC transmembrane type-1 2 domain is found at 838–1125 (IFAFIAAICA…VFTFVPDASK (288 aa)). N-linked (GlcNAc...) asparagine glycosylation occurs at Asn934. Transmembrane regions (helical) follow at residues 952 to 972 (GLFG…IGGC), 973 to 993 (IIGL…IPIL), 1072 to 1092 (GLTF…IIDG), and 1099 to 1119 (FYTV…VFTF). N-linked (GlcNAc...) asparagine glycans are attached at residues Asn1127 and Asn1182. Residues 1162–1402 (VRIEGVHFRY…KGGYYDLVQM (241 aa)) enclose the ABC transporter 2 domain. 1197–1204 (GPSGCGKS) lines the ATP pocket. Asn1404 is a glycosylation site (N-linked (GlcNAc...) asparagine).

It belongs to the ABC transporter superfamily. ABCB family. Multidrug resistance exporter (TC 3.A.1.201) subfamily.

It localises to the cell membrane. It carries out the reaction itraconazole(in) + ATP + H2O = itraconazole(out) + ADP + phosphate + H(+). The enzyme catalyses voriconazole(in) + ATP + H2O = voriconazole(out) + ADP + phosphate + H(+). It catalyses the reaction fluconazole(in) + ATP + H2O = fluconazole(out) + ADP + phosphate + H(+). In terms of biological role, pleiotropic ABC efflux transporter that confers resistance to structurally and functionally unrelated compounds including azoles such as fluconazole (FLC), itraconazole (ITC), posaconazole (POS), nocodazole and voriconazole (VRC). This Cryptococcus deuterogattii (strain R265) (Cryptococcus gattii VGII (strain R265)) protein is ABC multidrug transporter MDR1.